A 501-amino-acid chain; its full sequence is MVTNMVKLRNLRRLYCSSRLLRTIQNGRISSVSSISLSKKYTTKSAKEGEENVERKHEEEKKDTLKSSSVPTSRISRLFHYGSLAAGVGMNAAAKGISEVAKGNSPTWKSLILSDSNIDRITNKFSKMRGVALKIGQLLSFQDEKVLPKELYEILSRVQNSANHMPQRQLEKVMAKELGANWKTKFSKFDKIPMAAASIGQVHAAELPSGQRVVVKIQYPGVKESIDSDLNSLLMLLTASSLLPKGLFLDKTIANARTELKWECDYNREARALQKFEALLKDDPAFEVPHVFPEYTTDNIITMTRMEGTEIMKLPKASQETKNFISENIMRLCLEEIATFKYMQTDPNWANFLYNGRTKKIELLDFGASRPFAEDFILKYRKLLTYATLRDRKGAYEMSVQLGYLTGLESQSMKDAHVDSVLTLGEPFRGDVDKSFDFKDQTVSDRIRGNIGLMLNERLCPPPEETYSLHRKFSGIFLLCARMGASVHCAKLFKEIFAYKV.

The N-terminal 29 residues, Met-1–Ile-29, are a transit peptide targeting the mitochondrion. Residues Tyr-41–Ser-69 are disordered. Basic and acidic residues predominate over residues Ser-45–Leu-65. The KxGQ motif motif lies at Lys-134–Gln-137. The Protein kinase domain maps to Lys-188–Val-501. An AAAS motif motif is present at residues Ala-195–Ser-198. ATP contacts are provided by residues Ser-198, Lys-216, and Met-303–Met-306. The Proton acceptor role is filled by Asp-346. ATP-binding residues include Asn-351 and Asp-365.

This sequence belongs to the protein kinase superfamily. ADCK protein kinase family. Forms homopolymers. Predominantly associated with a complex of about 500 kDa.

It is found in the mitochondrion inner membrane. It participates in cofactor biosynthesis; ubiquinone biosynthesis. Atypical kinase involved in the biosynthesis of coenzyme Q, also named ubiquinone, an essential lipid-soluble electron transporter for aerobic cellular respiration. Its substrate specificity is still unclear: may act as a protein kinase that mediates phosphorylation of COQ3, COQ5 and/or COQ7. According to other reports, acts as a small molecule kinase, possibly a lipid kinase that phosphorylates a prenyl lipid in the ubiquinone biosynthesis pathway, as suggested by its ability to bind coenzyme Q lipid intermediates. The protein is Atypical kinase COQ8, mitochondrial (COQ8) of Saccharomyces cerevisiae (strain ATCC 204508 / S288c) (Baker's yeast).